The primary structure comprises 296 residues: Ribosomal RNA small subunit methyltransferase H (296 aa).

S-adenosyl-L-methionine-binding positions include Gly30 to His32, Asp49, Phe77, Asp95, and Gln102.

It belongs to the methyltransferase superfamily. RsmH family.

Its subcellular location is the cytoplasm. It catalyses the reaction cytidine(1402) in 16S rRNA + S-adenosyl-L-methionine = N(4)-methylcytidine(1402) in 16S rRNA + S-adenosyl-L-homocysteine + H(+). Functionally, specifically methylates the N4 position of cytidine in position 1402 (C1402) of 16S rRNA. This Hydrogenobaculum sp. (strain Y04AAS1) protein is Ribosomal RNA small subunit methyltransferase H.